We begin with the raw amino-acid sequence, 234 residues long: 2,3,4,5-tetrahydropyridine-2,6-dicarboxylate N-acetyltransferase (234 aa).

Belongs to the transferase hexapeptide repeat family. DapH subfamily.

It catalyses the reaction (S)-2,3,4,5-tetrahydrodipicolinate + acetyl-CoA + H2O = L-2-acetamido-6-oxoheptanedioate + CoA. The protein operates within amino-acid biosynthesis; L-lysine biosynthesis via DAP pathway; LL-2,6-diaminopimelate from (S)-tetrahydrodipicolinate (acetylase route): step 1/3. Its function is as follows. Catalyzes the transfer of an acetyl group from acetyl-CoA to tetrahydrodipicolinate. The protein is 2,3,4,5-tetrahydropyridine-2,6-dicarboxylate N-acetyltransferase of Leuconostoc citreum (strain KM20).